The sequence spans 136 residues: Small ribosomal subunit protein uS8c (136 aa).

The protein belongs to the universal ribosomal protein uS8 family. Part of the 30S ribosomal subunit.

Its subcellular location is the plastid. The protein localises to the chloroplast. Functionally, one of the primary rRNA binding proteins, it binds directly to 16S rRNA central domain where it helps coordinate assembly of the platform of the 30S subunit. This Agrostis stolonifera (Creeping bentgrass) protein is Small ribosomal subunit protein uS8c (rps8).